We begin with the raw amino-acid sequence, 681 residues long: Dipeptidyl carboxypeptidase (681 aa).

A Zn(2+)-binding site is contributed by His470. The active site involves Glu471. Zn(2+)-binding residues include His474 and His477.

This sequence belongs to the peptidase M3 family. Requires Zn(2+) as cofactor.

The protein resides in the cytoplasm. The enzyme catalyses Hydrolysis of unblocked, C-terminal dipeptides from oligopeptides, with broad specificity. Does not hydrolyze bonds in which P1' is Pro, or both P1 and P1' are Gly.. Stimulated by Mn(2+), Mg(2+), Co(2+) and Ca(2+), inhibited by Cu(2+), Ni(2+), Zn(2+), chymostatin and 1,10-phenanthroline. Removes dipeptides from the C-termini of N-blocked tripeptides, tetrapeptides and larger peptides. This is Dipeptidyl carboxypeptidase from Escherichia coli (strain K12).